Reading from the N-terminus, the 174-residue chain is Crossover junction endodeoxyribonuclease RuvC (174 aa).

Active-site residues include Asp8, Glu68, and Asp140. Asp8, Glu68, and Asp140 together coordinate Mg(2+).

It belongs to the RuvC family. As to quaternary structure, homodimer which binds Holliday junction (HJ) DNA. The HJ becomes 2-fold symmetrical on binding to RuvC with unstacked arms; it has a different conformation from HJ DNA in complex with RuvA. In the full resolvosome a probable DNA-RuvA(4)-RuvB(12)-RuvC(2) complex forms which resolves the HJ. Requires Mg(2+) as cofactor.

The protein resides in the cytoplasm. It catalyses the reaction Endonucleolytic cleavage at a junction such as a reciprocal single-stranded crossover between two homologous DNA duplexes (Holliday junction).. The RuvA-RuvB-RuvC complex processes Holliday junction (HJ) DNA during genetic recombination and DNA repair. Endonuclease that resolves HJ intermediates. Cleaves cruciform DNA by making single-stranded nicks across the HJ at symmetrical positions within the homologous arms, yielding a 5'-phosphate and a 3'-hydroxyl group; requires a central core of homology in the junction. The consensus cleavage sequence is 5'-(A/T)TT(C/G)-3'. Cleavage occurs on the 3'-side of the TT dinucleotide at the point of strand exchange. HJ branch migration catalyzed by RuvA-RuvB allows RuvC to scan DNA until it finds its consensus sequence, where it cleaves and resolves the cruciform DNA. This chain is Crossover junction endodeoxyribonuclease RuvC, found in Legionella pneumophila (strain Corby).